The sequence spans 426 residues: Divalent metal cation transporter MntH (426 aa).

The next 10 membrane-spanning stretches (helical) occupy residues 31 to 51, 58 to 78, 134 to 156, 169 to 189, 208 to 228, 256 to 276, 298 to 318, 337 to 357, 363 to 383, and 402 to 422; these read WYLLGPAFVAAIAYVDPGNVA, AQFGYLQLWVVVVANVLAGLV, ILFRVSLLLGGVITGTVSLLLLM, VITGLLFVIVVGFTSSFFVAT, SVLLAAAIIGATVMPHAVYLH, VILAMTIAGIVNTAMLLVAAI, LGATIAMLFAIGLLASSLASA, IPMLIRRLITLCPAIAILALG, ALVLSQIVLSFGIPFAVLPLV, and TVLGWAVAILVSLLNVVLIYL.

The protein belongs to the NRAMP family.

It is found in the cell membrane. Its function is as follows. H(+)-stimulated, divalent metal cation uptake system. This chain is Divalent metal cation transporter MntH, found in Mycobacterium leprae (strain TN).